The chain runs to 94 residues: Bacterial microcompartment shell protein PduA (94 aa).

Residues 5–89 (ALGMVETKGL…PHTDVEKILP (85 aa)) enclose the BMC domain.

The protein belongs to the bacterial microcompartments protein family. Homohexamer with a central pore of about 5.6 Angstroms in diameter. The hexamers pack against each other in arrays. Interacts with the N-terminus of PduP which targets PduP to the BMC. Modeling suggests PduC, PduD, PduE, PduL and PduP interact with a cleft formed by the C-terminal segments of 2 adjacent PduA subunits (on the BMC luminal side) in the hexamer.

The protein resides in the bacterial microcompartment. It participates in polyol metabolism; 1,2-propanediol degradation. In terms of biological role, one of the major shell proteins of the bacterial microcompartment (BMC) dedicated to 1,2-propanediol (1,2-PD) degradation. At least one of PduA or PduJ is required for BMC assembly; it must be encoded as the first gene in the pdu operon. Not required for structural integrity of BMCs, it is required to mitigate propionaldehyde toxicity. Controls diffusion of 1,2-PD into and propionaldehyde out of the BMC shell; residue 40 is particularly important for pore permeability. Overexpression of this protein leads to aberrant filaments that extend the length of the cell, cross the cleavage furrow and impair division. The filaments form nanotubes with a hollow center. The isolated BMC shell component protein ratio for J:A:B':B:K:T:U is approximately 15:10:7:6:1:1:2. Edge residues (particularly Lys-26) are important for function and assembly of the BMC, and influence array formation by hexamers. Interaction with PduA allows encapsulation of at least PduP in BMCs. Probably also targets PduD to the BMC. PduA is probably the hub for binding multiple enzymes to the interior of the BMC; modeling suggests PduC, PduD, PduE, PduG, PduL and PduP are targeted to PduA. The 1,2-PD-specific bacterial microcompartment (BMC) concentrates low levels of 1,2-PD catabolic enzymes, concentrates volatile reaction intermediates thus enhancing pathway flux and keeps the level of toxic, mutagenic propionaldehyde low. The protein is Bacterial microcompartment shell protein PduA of Salmonella typhimurium (strain LT2 / SGSC1412 / ATCC 700720).